The primary structure comprises 889 residues: Phosphofurin acidic cluster sorting protein 2 (889 aa).

3 disordered regions span residues 180 to 246, 293 to 463, and 687 to 740; these read DHED…TSMT, LDME…PDAR, and SSAT…SQGV. Over residues 343 to 358 the composition is skewed to basic and acidic residues; the sequence is SHKEPPSPADVPEKTR. Phosphoserine is present on residues S390, S416, S453, S691, and S694. Composition is skewed to low complexity over residues 687-720 and 727-737; these read SSATSGDSDDAAPSGSGTLSSTPPSASPAAKEAS and PSVSGGLSSPS.

Belongs to the PACS family. Interacts with BID and PKD2. Interacts with SIRT1. Interacts with HDAC1. Interacts with TRPV1. Interacts with WDR37. In terms of assembly, (Microbial infection) Interacts with HIV-1 Nef. In terms of tissue distribution, broadly expressed, with greatest levels in skeletal muscle followed by heart, brain, pancreas and testis.

The protein resides in the endoplasmic reticulum. It localises to the mitochondrion. Multifunctional sorting protein that controls the endoplasmic reticulum (ER)-mitochondria communication, including the apposition of mitochondria with the ER and ER homeostasis. In addition, in response to apoptotic inducer, translocates BIB to mitochondria, which initiates a sequence of events including the formation of mitochondrial truncated BID, the release of cytochrome c, the activation of caspase-3 thereby causing cell death. May also be involved in ion channel trafficking, directing acidic cluster-containing ion channels to distinct subcellular compartments. The polypeptide is Phosphofurin acidic cluster sorting protein 2 (Homo sapiens (Human)).